We begin with the raw amino-acid sequence, 90 residues long: UPF0335 protein RPB_1426 (90 aa).

The protein belongs to the UPF0335 family.

This chain is UPF0335 protein RPB_1426, found in Rhodopseudomonas palustris (strain HaA2).